The primary structure comprises 692 residues: Zinc finger protein 180 (692 aa).

Positions 72-145 constitute a KRAB domain; sequence VNFKIVTVDF…GVKIERFTRD (74 aa). Residues Lys-138, Lys-159, Lys-168, Lys-191, Lys-198, Lys-226, Lys-304, Lys-313, and Lys-330 each participate in a glycyl lysine isopeptide (Lys-Gly) (interchain with G-Cter in SUMO2) cross-link. 12 C2H2-type zinc fingers span residues 353–375, 381–403, 409–431, 437–459, 465–487, 493–515, 521–543, 549–571, 577–599, 605–627, 633–655, and 661–683; these read FECNQCGKSFSWSSHLVAHQRTH, YECSECGKSFSRSSHLVSHQRTH, YRCNQCGKSFSQSYVLVVHQRTH, YECNQCGKSFRQSYKLIAHQRTH, YECNQCGKSFIQSYKLIAHQRIH, YECNQCGKSFSQSYKLVAHQRTH, FECNQCGKSFSWSSQLVAHQRTH, YECSECGKSFNRSSHLVMHQRIH, YECNQCGKSFSQSYVLVVHQRTH, YECSQCGKSFRQSSCLTQHQRTH, FECNQCGKTFSLSARLIVHQRTH, and FTCIQCGKAFINSYKLIRHQATH.

The protein belongs to the krueppel C2H2-type zinc-finger protein family.

Its subcellular location is the nucleus. May be involved in transcriptional regulation. The chain is Zinc finger protein 180 (ZNF180) from Homo sapiens (Human).